The sequence spans 223 residues: Ribose-5-phosphate isomerase A (223 aa).

Residues 29 to 32 (TGST), 82 to 85 (DGAD), and 95 to 98 (KGGG) contribute to the substrate site. Catalysis depends on glutamate 104, which acts as the Proton acceptor. Lysine 122 is a binding site for substrate.

The protein belongs to the ribose 5-phosphate isomerase family. In terms of assembly, homodimer.

It catalyses the reaction aldehydo-D-ribose 5-phosphate = D-ribulose 5-phosphate. It participates in carbohydrate degradation; pentose phosphate pathway; D-ribose 5-phosphate from D-ribulose 5-phosphate (non-oxidative stage): step 1/1. Functionally, catalyzes the reversible conversion of ribose-5-phosphate to ribulose 5-phosphate. The polypeptide is Ribose-5-phosphate isomerase A (Neisseria meningitidis serogroup B (strain ATCC BAA-335 / MC58)).